We begin with the raw amino-acid sequence, 589 residues long: Putative ABC transporter ATP-binding protein MG015 (589 aa).

A run of 6 helical transmembrane segments spans residues 9–29, 66–86, 161–181, 251–271, 280–300, and 303–323; these read LLYVFLCIVLGILYGIANPIL, LTIVSVTVFVAYALIFVFNVA, LIFLLSPVIALISLSILATLI, IFLFSWFGFISNITYLVSISI, IPSFGISVINYSFMLSYIASL, and ITLALDQIFTLWNLVQLGVVS. The ABC transmembrane type-1 domain occupies 9–319; it reads LLYVFLCIVL…IFTLWNLVQL (311 aa). Residues 352 to 586 form the ABC transporter domain; it reads IRFENVAFGY…NGFYARLKQS (235 aa). 385-392 is an ATP binding site; the sequence is GPTGAGKS.

It belongs to the ABC transporter superfamily.

It localises to the cell membrane. The sequence is that of Putative ABC transporter ATP-binding protein MG015 from Mycoplasma genitalium (strain ATCC 33530 / DSM 19775 / NCTC 10195 / G37) (Mycoplasmoides genitalium).